Reading from the N-terminus, the 613-residue chain is Ribosome-associated molecular chaperone SSB1 (613 aa).

The nucleotide binding domain (NBD) stretch occupies residues 1–391 (MAEGVFSGAI…ILTGSNLSDD (391 aa)). ATP-binding positions include 16–18 (TTY), K73, 205–207 (GGT), 271–278 (ERAKRTLS), and G342. The tract at residues 392 to 402 (TKDLLLLDVAP) is inter-domain linker. The tract at residues 403–613 (LSLGVAMQGD…RVVTKAMATR (211 aa)) is substrate binding domain (SBD). The lid domain (SBDalpha) stretch occupies residues 516–612 (SEDIEKMVSQ…KRVVTKAMAT (97 aa)). Positions 574–582 (VEAALADAF) match the Nuclear export signal motif.

It belongs to the heat shock protein 70 family. Ssb-type Hsp70 subfamily. In terms of assembly, binds to ribosomes. Binds close to the ribosomal tunnel exit via contacts with both ribosomal proteins and rRNA. Directly interacts with nascent polypeptides. This interaction is dependent on the ribosome-associated complex (RAC). Interacts with SSE1. Interacts with FES1.

Its subcellular location is the cytoplasm. It carries out the reaction ATP + H2O = ADP + phosphate + H(+). Ribosome-bound, Hsp70-type chaperone that assists in the cotranslational folding of newly synthesized proteins in the cytosol. Stimulates folding by interacting with nascent chains, binding to short, largely hydrophobic sequences exposed by unfolded proteins, thereby stabilizing longer, more slowly translated, and aggregation-prone nascent polypeptides and domains that cannot fold stably until fully synthesized. The Hsp70-protein substrate interaction depends on ATP-binding and on allosteric regulation between the NBD and the SBD. The ATP-bound state is characterized by a fast exchange rate of substrate (low affinity state), while in the ADP-bound state exchange is much slower (high affinity state). During the Hsp70 cycle, the chaperone switches between the ATP-bound state (open conformation) and the ADP-bound state (closed conformation) by major conformational rearrangements involving mainly the lid domain. Ssb cooperates with a specific Hsp40/Hsp70 co-chaperone termed the ribosome-associated complex (RAC), which stimulates the ATPase activity of the ribosome-associated pool of Ssbs and switches it to the high affinity substrate binding state. Hsp110 chaperone SSE1 and FES1 act as nucleotide exchange factors that cause substrate release. This Eremothecium gossypii (strain ATCC 10895 / CBS 109.51 / FGSC 9923 / NRRL Y-1056) (Yeast) protein is Ribosome-associated molecular chaperone SSB1 (SSB1).